We begin with the raw amino-acid sequence, 239 residues long: Fatty acid metabolism regulator protein (239 aa).

An HTH gntR-type domain is found at 6 to 74 (QSPAGFAEEY…HGKPTKVNNF (69 aa)). The segment at residues 34–53 (ERELSELIGVTRTTLREVLQ) is a DNA-binding region (H-T-H motif).

Homodimer.

Its subcellular location is the cytoplasm. Its function is as follows. Multifunctional regulator of fatty acid metabolism. Represses transcription of at least eight genes required for fatty acid transport and beta-oxidation including fadA, fadB, fadD, fadL and fadE. Activates transcription of at least three genes required for unsaturated fatty acid biosynthesis: fabA, fabB and iclR, the gene encoding the transcriptional regulator of the aceBAK operon encoding the glyoxylate shunt enzymes. Binding of FadR is specifically inhibited by long chain fatty acyl-CoA compounds. The polypeptide is Fatty acid metabolism regulator protein (Salmonella typhi).